The chain runs to 410 residues: F-box/WD repeat-containing protein 4 (410 aa).

The region spanning Gly-23–Ile-69 is the F-box domain. 4 WD repeats span residues Gly-159–Tyr-196, Ala-198–Cys-235, Pro-289–Val-327, and Pro-333–Ala-372.

In terms of assembly, part of a SCF (SKP1-cullin-F-box) protein ligase complex. Interacts with POUF51.

Functionally, probably recognizes and binds to some phosphorylated proteins and promotes their ubiquitination and degradation. Likely to be involved in key signaling pathways crucial for normal limb development. May participate in Wnt signaling. This is F-box/WD repeat-containing protein 4 (Fbxw4) from Mus musculus (Mouse).